Reading from the N-terminus, the 398-residue chain is Cytohesin-1 (398 aa).

An N-acetylmethionine modification is found at Met1. Positions 10–67 (SDLTAEERQELENIRRRKQELLADIQRLKDEIAEVANEIENLGSTEERKNMQRNKQVA) form a coiled coil. In terms of domain architecture, SEC7 spans 73–202 (FNMDPKKGIQ…IIMLNTSLHN (130 aa)). Residues 260–377 (NPDREGWLLK…WIKCIKAAIS (118 aa)) form the PH domain. A 1,2-diacyl-sn-glycero-3-phospho-(1D-myo-inositol-3,4,5-trisphosphate)-binding positions include 269–277 (KLGGGRVKT), Arg281, Tyr292, Arg302, and Asn351. A C-terminal autoinhibitory region region spans residues 388–396 (RKKKVSSTK).

As to quaternary structure, interacts with TRIM23 and CYTIP. Interacts (via coiled-coil domain) with FRMD4A (via coiled-coil domain). Interacts with FRMD4B. Found in a complex with PARD3, CYTH1 and FRMD4A. Interacts (via N-terminal domain) with INAVA (via N-terminal domain). Ubiquitinated by SCF(FBXW11) E3 ubiquitin-protein ligase complex. Ubiquitination induces proteasomal degradation.

The protein resides in the cell membrane. Its subcellular location is the cytoplasm. The protein localises to the cytosol. It is found in the cell junction. It localises to the tight junction. The protein resides in the adherens junction. Its function is as follows. Promotes guanine-nucleotide exchange on ARF1, ARF5 and ARF6. Promotes the activation of ARF factors through replacement of GDP with GTP. Plays an important role in membrane trafficking, during junctional remodeling and epithelial polarization, through regulation of ARF6 activity. This is Cytohesin-1 (CYTH1) from Chlorocebus aethiops (Green monkey).